We begin with the raw amino-acid sequence, 208 residues long: Large ribosomal subunit protein bL25 (208 aa).

The disordered stretch occupies residues D163–E208. Over residues P198–E208 the composition is skewed to basic and acidic residues.

Belongs to the bacterial ribosomal protein bL25 family. CTC subfamily. Part of the 50S ribosomal subunit; part of the 5S rRNA/L5/L18/L25 subcomplex. Contacts the 5S rRNA. Binds to the 5S rRNA independently of L5 and L18.

Functionally, this is one of the proteins that binds to the 5S RNA in the ribosome where it forms part of the central protuberance. The chain is Large ribosomal subunit protein bL25 from Bacillus licheniformis (strain ATCC 14580 / DSM 13 / JCM 2505 / CCUG 7422 / NBRC 12200 / NCIMB 9375 / NCTC 10341 / NRRL NRS-1264 / Gibson 46).